The sequence spans 45 residues: uncharacterized protein (45 aa).

Residues 1–26 are compositionally biased toward basic and acidic residues; sequence MIMGKDRQEKKLKASGRVESDRDQSI. The interval 1-45 is disordered; the sequence is MIMGKDRQEKKLKASGRVESDRDQSIHYDGATSLEQNGRFKKRKS.

This is an uncharacterized protein from Bacillus subtilis (strain 168).